A 125-amino-acid polypeptide reads, in one-letter code: Small ribosomal subunit protein uS12 (125 aa).

A disordered region spans residues 9–31 (RQGREVEKIKSKSPAMENSPQRR). Asp89 is subject to 3-methylthioaspartic acid. Positions 106-125 (GVKDRKQSRSKYGAKRPKKA) are disordered. Positions 113-125 (SRSKYGAKRPKKA) are enriched in basic residues.

The protein belongs to the universal ribosomal protein uS12 family. In terms of assembly, part of the 30S ribosomal subunit. Contacts proteins S8 and S17. May interact with IF1 in the 30S initiation complex.

Its function is as follows. With S4 and S5 plays an important role in translational accuracy. In terms of biological role, interacts with and stabilizes bases of the 16S rRNA that are involved in tRNA selection in the A site and with the mRNA backbone. Located at the interface of the 30S and 50S subunits, it traverses the body of the 30S subunit contacting proteins on the other side and probably holding the rRNA structure together. The combined cluster of proteins S8, S12 and S17 appears to hold together the shoulder and platform of the 30S subunit. The chain is Small ribosomal subunit protein uS12 from Polaromonas sp. (strain JS666 / ATCC BAA-500).